The primary structure comprises 130 residues: Small ribosomal subunit protein uS11c (130 aa).

It belongs to the universal ribosomal protein uS11 family. Part of the 30S ribosomal subunit.

Its subcellular location is the plastid. The protein resides in the chloroplast. This Zygnema circumcarinatum (Green alga) protein is Small ribosomal subunit protein uS11c.